The chain runs to 252 residues: Trans-aconitate 2-methyltransferase (252 aa).

The protein belongs to the methyltransferase superfamily. Tam family.

It localises to the cytoplasm. It catalyses the reaction trans-aconitate + S-adenosyl-L-methionine = (E)-3-(methoxycarbonyl)pent-2-enedioate + S-adenosyl-L-homocysteine. Its function is as follows. Catalyzes the S-adenosylmethionine monomethyl esterification of trans-aconitate. The chain is Trans-aconitate 2-methyltransferase from Shigella flexneri serotype 5b (strain 8401).